The primary structure comprises 212 residues: Peptide methionine sulfoxide reductase MsrA (212 aa).

Cys-52 is an active-site residue.

The protein belongs to the MsrA Met sulfoxide reductase family.

It carries out the reaction L-methionyl-[protein] + [thioredoxin]-disulfide + H2O = L-methionyl-(S)-S-oxide-[protein] + [thioredoxin]-dithiol. It catalyses the reaction [thioredoxin]-disulfide + L-methionine + H2O = L-methionine (S)-S-oxide + [thioredoxin]-dithiol. Has an important function as a repair enzyme for proteins that have been inactivated by oxidation. Catalyzes the reversible oxidation-reduction of methionine sulfoxide in proteins to methionine. The protein is Peptide methionine sulfoxide reductase MsrA of Salmonella newport (strain SL254).